Consider the following 452-residue polypeptide: tRNA pseudouridine synthase Pus10 (452 aa).

The THUMP domain occupies 71–200 (EMLRALAPSC…DGHVEIQIQP (130 aa)). D269 functions as the Nucleophile in the catalytic mechanism. Residues Y335 and Y406 each coordinate substrate.

It belongs to the pseudouridine synthase Pus10 family.

The catalysed reaction is uridine(54) in tRNA = pseudouridine(54) in tRNA. The enzyme catalyses uridine(55) in tRNA = pseudouridine(55) in tRNA. Its function is as follows. Responsible for synthesis of pseudouridine from uracil-54 and uracil-55 in the psi GC loop of transfer RNAs. The chain is tRNA pseudouridine synthase Pus10 from Methanothrix thermoacetophila (strain DSM 6194 / JCM 14653 / NBRC 101360 / PT) (Methanosaeta thermophila).